The chain runs to 359 residues: Membrane-bound lytic murein transglycosylase C (359 aa).

Residues 1 to 16 form the signal peptide; the sequence is MKKYLALALIAPLLIS. C17 carries N-palmitoyl cysteine lipidation. C17 carries S-diacylglycerol cysteine lipidation.

The protein belongs to the transglycosylase Slt family.

It is found in the cell outer membrane. The catalysed reaction is Exolytic cleavage of the (1-&gt;4)-beta-glycosidic linkage between N-acetylmuramic acid (MurNAc) and N-acetylglucosamine (GlcNAc) residues in peptidoglycan, from either the reducing or the non-reducing ends of the peptidoglycan chains, with concomitant formation of a 1,6-anhydrobond in the MurNAc residue.. Functionally, murein-degrading enzyme. May play a role in recycling of muropeptides during cell elongation and/or cell division. This Escherichia coli O157:H7 protein is Membrane-bound lytic murein transglycosylase C.